The chain runs to 997 residues: MLYSPLYQSIRLILFGALGLSSLTVSAAINQTDSMMPEPLVTDSSNQYADDVATDAGFNNEINNQDISYQSDSQQSAAYKKASLSSDATLSNDAAVNNNNITAINDRTKTSQDSRVAPVNTSNAAKAGNRRIDTNDESIQESLKRLAEFYELTPDTNVATSNNTGTSVNDEQNNIQNSLTPVTTNIPTVGSNLRLLPHTVDSAARCEGQWVYPKKNPNYQRAVNEASASSGQPAPNLNGLPNNQAPLFAESDYGYYDNVDYAELSGNVIIDQGTQHIEAEKIVLDLSNGVAAAQGKVMFTDQATGNVSVNGAQDRTQQNGKTSLTDKATQGGLIGVADNLNYNTETGQSTATNVAFASVELQAHGYAKRLNRPNESQYELDEVMYSTCPPTNRKWQFDAKSIDLDTETGRGEAYNTTFRIADVPVFYLPYFNFPIDSRRGSGFLLPNASISSENGLEIDVPYYFNLAPNYDATLSTHIYTTRNPMLSGEFRYLTENYGEGIFNGSYLPNDKEYDGEDRRSLFYDHYWSSTSIPRLSGEAKYSYVSDADYLNDFDTLGLSDNTLNLPRRAQLNYYNDYVDGELKVETFQTLDALNNNGQMLQDKDKPYSRLPQLKLDYRLPWAKHFDITGVSDSAYFKKSIDDGSENEKSGTRFYNKLSASYPMENSWGYIKPKLSLQHLFTTYDEDSLVDNSLDKDDGSQSVFVPQASIDAGLHFYQAGSPFGAFDDTLGGYRLLSPRLKYTYSPYRDQNDIPNFNTRIASINYEQLFSDSWFLGHDRLQDLHAFTPGINYRYIDATGVTRFDGSIGEQFYLDDGRVTLDNTKPVFTSSSSGLVWDTSTQPYNNVWVDVSGALTNSYDLNYITTELRYQPSDRSLFNVGFIKRQRDENTNQLPLSALTASAVFPINNNWRVLAQGQYDYNRNQMLDSLIGIDYEDCCFGFAVYGRRYYNDLNIAEKPTQAIMAEVRLSGLGSGSSRLTRLLADKVLGFEPVQNAWKD.

An N-terminal signal peptide occupies residues 1 to 27 (MLYSPLYQSIRLILFGALGLSSLTVSA).

This sequence belongs to the LptD family. In terms of assembly, component of the lipopolysaccharide transport and assembly complex. Interacts with LptE and LptA.

The protein resides in the cell outer membrane. Together with LptE, is involved in the assembly of lipopolysaccharide (LPS) at the surface of the outer membrane. The chain is LPS-assembly protein LptD from Psychrobacter cryohalolentis (strain ATCC BAA-1226 / DSM 17306 / VKM B-2378 / K5).